Here is a 189-residue protein sequence, read N- to C-terminus: HGPRTase-like protein 2 (189 aa).

The protein belongs to the purine/pyrimidine phosphoribosyltransferase family. Archaeal HPRT subfamily.

Its function is as follows. May catalyze a purine salvage reaction, the substrate is unknown. The protein is HGPRTase-like protein 2 of Haloarcula marismortui (strain ATCC 43049 / DSM 3752 / JCM 8966 / VKM B-1809) (Halobacterium marismortui).